Here is a 242-residue protein sequence, read N- to C-terminus: Methylthioribulose-1-phosphate dehydratase (242 aa).

The residue at position 87 (S87) is a Phosphoserine. C97 contributes to the substrate binding site. Zn(2+) is bound by residues H115 and H117. E139 acts as the Proton donor/acceptor in catalysis. Zn(2+) is bound at residue H195.

The protein belongs to the aldolase class II family. MtnB subfamily. As to quaternary structure, homotetramer. Interacts with APAF1. May interact with CASP1. Zn(2+) serves as cofactor. Isoform 1 is ubiquitously expressed. Isoform 2 is expressed at lower levels and detected in heart, brain, pancreas, liver, placenta, skeletal muscle and kidney.

It is found in the cytoplasm. The enzyme catalyses 5-(methylsulfanyl)-D-ribulose 1-phosphate = 5-methylsulfanyl-2,3-dioxopentyl phosphate + H2O. The protein operates within amino-acid biosynthesis; L-methionine biosynthesis via salvage pathway; L-methionine from S-methyl-5-thio-alpha-D-ribose 1-phosphate: step 2/6. Functionally, catalyzes the dehydration of methylthioribulose-1-phosphate (MTRu-1-P) into 2,3-diketo-5-methylthiopentyl-1-phosphate (DK-MTP-1-P). Functions in the methionine salvage pathway, which plays a key role in cancer, apoptosis, microbial proliferation and inflammation. May inhibit the CASP1-related inflammatory response (pyroptosis), the CASP9-dependent apoptotic pathway and the cytochrome c-dependent and APAF1-mediated cell death. This is Methylthioribulose-1-phosphate dehydratase from Homo sapiens (Human).